Here is a 221-residue protein sequence, read N- to C-terminus: Thiol:disulfide interchange protein TlpA (221 aa).

The Cytoplasmic segment spans residues 1–11 (MLDTKPSATRR). The chain crosses the membrane as a helical span at residues 12-35 (IPLVIATVAVGGLAGFAALYGLGL). The Periplasmic segment spans residues 36–221 (SRAPTGDPAC…AATGKAAAAL (186 aa)). Cystine bridges form between cysteine 45–cysteine 190 and cysteine 107–cysteine 110. A Thioredoxin domain is found at 69–215 (ASAPLKLPDL…ALKLIRAATG (147 aa)).

This sequence belongs to the thioredoxin family. In terms of assembly, monomer.

The protein resides in the cell membrane. In terms of biological role, involved in cytochrome aa3 assembly. In Bradyrhizobium diazoefficiens (strain JCM 10833 / BCRC 13528 / IAM 13628 / NBRC 14792 / USDA 110), this protein is Thiol:disulfide interchange protein TlpA (tlpA).